Here is a 387-residue protein sequence, read N- to C-terminus: 3-ketoacyl-CoA thiolase (387 aa).

Residue C91 is the Acyl-thioester intermediate of the active site. Catalysis depends on proton acceptor residues H343 and C373.

The protein belongs to the thiolase-like superfamily. Thiolase family. As to quaternary structure, heterotetramer of two alpha chains (FadB) and two beta chains (FadA).

It localises to the cytoplasm. It carries out the reaction an acyl-CoA + acetyl-CoA = a 3-oxoacyl-CoA + CoA. It functions in the pathway lipid metabolism; fatty acid beta-oxidation. Catalyzes the final step of fatty acid oxidation in which acetyl-CoA is released and the CoA ester of a fatty acid two carbons shorter is formed. The chain is 3-ketoacyl-CoA thiolase from Shigella dysenteriae serotype 1 (strain Sd197).